We begin with the raw amino-acid sequence, 329 residues long: Alpha-tubulin N-acetyltransferase 1 (329 aa).

One can recognise an N-acetyltransferase domain in the interval S5 to F185. Acetyl-CoA is bound by residues F119–K132 and S155–K164. Disordered stretches follow at residues P218–K261 and G306–H329. Polar residues predominate over residues Y220–N229. A compositionally biased stretch (pro residues) spans T238–V249. Over residues P313 to H329 the composition is skewed to polar residues.

This sequence belongs to the acetyltransferase ATAT1 family.

It carries out the reaction L-lysyl-[alpha-tubulin] + acetyl-CoA = N(6)-acetyl-L-lysyl-[alpha-tubulin] + CoA + H(+). Functionally, specifically acetylates 'Lys-40' in alpha-tubulin on the lumenal side of microtubules. Promotes microtubule destabilization and accelerates microtubule dynamics; this activity may be independent of acetylation activity. Acetylates alpha-tubulin with a slow enzymatic rate, due to a catalytic site that is not optimized for acetyl transfer. Enters the microtubule through each end and diffuses quickly throughout the lumen of microtubules. Acetylates only long/old microtubules because of its slow acetylation rate since it does not have time to act on dynamically unstable microtubules before the enzyme is released. This Trypanosoma cruzi (strain CL Brener) protein is Alpha-tubulin N-acetyltransferase 1.